Consider the following 493-residue polypeptide: MTELNKLSVADSLKGLKNKEFTSKELVNAHIKQIEKHKNLNAYVTETFDLALKQAEEADQSYAKNHSRTLEGIPFAAKDLFCTKGIRTTACSNILREFIPNYESGVTQNIFNKGGVMLGKTNMDEFAMGSANITSCFGNVISPWKALDDGADLVPGGSSGGSAAAVSGFMATAALGSDTGGSVRQPASFTGLVGFKPTYGRCSRYGMVSFASSLDQAGIFTRSVLDSSIMLEAMIGFDERDSTSIKMEVPQLQPAIGSSIKGMKIGVPLSLGEGGIIEPDIMKMWHSTIELLKDAGAEIIDISLPHTKYGVAVYYVIAPAEASSNLSRYDGVRYGLRVEKENMSLDEMYEITRSSGFGDEVKRRIMIGTYVLSSSFMDAYYLKAQKVRRLVADDFNNAFAKVDAILLPSAPTEAFRIGEKQNDPTITYLNDLFTIPASLAGLPCVSVPAGLSNRGLPLGMQVIGKQLDEYNVLRVASAIEAGVKHIKFEPVGF.

Active-site charge relay system residues include lysine 78 and serine 158. The active-site Acyl-ester intermediate is serine 182.

Belongs to the amidase family. GatA subfamily. In terms of assembly, heterotrimer of A, B and C subunits.

The enzyme catalyses L-glutamyl-tRNA(Gln) + L-glutamine + ATP + H2O = L-glutaminyl-tRNA(Gln) + L-glutamate + ADP + phosphate + H(+). Allows the formation of correctly charged Gln-tRNA(Gln) through the transamidation of misacylated Glu-tRNA(Gln) in organisms which lack glutaminyl-tRNA synthetase. The reaction takes place in the presence of glutamine and ATP through an activated gamma-phospho-Glu-tRNA(Gln). In Rickettsia bellii (strain RML369-C), this protein is Glutamyl-tRNA(Gln) amidotransferase subunit A.